Consider the following 98-residue polypeptide: Glutaredoxin 1 (98 aa).

The Glutaredoxin domain maps to 1–98; sequence MNKAILHAII…KLLEGQPKKD (98 aa). The cysteines at positions 17 and 20 are disulfide-linked.

It belongs to the glutaredoxin family. In terms of assembly, monomer.

It localises to the cytoplasm. Functionally, has a glutathione-disulfide oxidoreductase activity in the presence of NADPH and glutathione reductase. Reduces low molecular weight disulfides and proteins. The sequence is that of Glutaredoxin 1 (grxC1) from Rickettsia bellii (strain RML369-C).